The chain runs to 127 residues: Large ribosomal subunit protein bL17 (127 aa).

The protein belongs to the bacterial ribosomal protein bL17 family. In terms of assembly, part of the 50S ribosomal subunit. Contacts protein L32.

This Xanthomonas axonopodis pv. citri (strain 306) protein is Large ribosomal subunit protein bL17.